Here is a 217-residue protein sequence, read N- to C-terminus: MKWDKRVVALILAVMIVCPLFAAPAHAQEQSILDKLVVLPSGEYNHSEAAAMKQRLEKIPTSILDALYSKGVKIKLTQGAITNEPELAYLKGVVPRGWEGTGLTWDDVPGVSERVVAVRIGYSEKGKGHNSLNLEIHETLHAVDRLVLNEVSGTDEFINIFNKEASVKYKGDGYVSAYPTEYFAEAASLYLYSDATRSDLKDSMPLTYEFMAKLFAN.

An N-terminal signal peptide occupies residues 1 to 27 (MKWDKRVVALILAVMIVCPLFAAPAHA). The ATLF-like domain maps to 30-216 (QSILDKLVVL…TYEFMAKLFA (187 aa)). Positions 112 to 115 (SERV) are plays a crucial role in substrate specificity. His-137 is a Zn(2+) binding site. Catalysis depends on Glu-138, which acts as the Proton acceptor. 3 residues coordinate Zn(2+): His-141, Tyr-174, and Glu-181.

This sequence belongs to the peptidase M34 family. Pro-Pro endopeptidase subfamily. As to quaternary structure, monomer. Zn(2+) serves as cofactor.

The protein resides in the secreted. The enzyme catalyses The enzyme catalyzes the hydrolytic cleavage of peptide bonds between two proline residues.. In terms of biological role, zinc-dependent endoprotease with a unique preference for proline residues surrounding the scissile bond, which cleaves in a PLP-|-PVP motif. Cleaves the cell surface protein encoded by an adjacent gene, which contains two PPEP-2 cleaving sites and putative extracellular matrix-binding domains. Thereby, may have a role in the regulation of P.alvei adhesion. Is not able to cleave within the PVP-|-PVQ motif, and only shows a very poor cleavage of the VNP-|-PVP motif in vitro, which is the optimal substrate peptide for PPEP-1 from P.difficile. The chain is Pro-Pro endopeptidase from Paenibacillus alvei (strain ATCC 6344 / DSM 29 / NBRC 3343 / NCIMB 9371 / NCTC 6352) (Bacillus alvei).